The following is a 252-amino-acid chain: Geranylgeranylglyceryl phosphate synthase (252 aa).

Residues Asp-27 and Thr-57 each contribute to the Mg(2+) site. Sn-glycerol 1-phosphate-binding positions include 175–181, 206–207, and 228–229; these read YLEAGSG, GG, and GN.

The protein belongs to the GGGP/HepGP synthase family. Group II subfamily. The cofactor is Mg(2+).

The protein resides in the cytoplasm. The enzyme catalyses sn-glycerol 1-phosphate + (2E,6E,10E)-geranylgeranyl diphosphate = sn-3-O-(geranylgeranyl)glycerol 1-phosphate + diphosphate. It participates in membrane lipid metabolism; glycerophospholipid metabolism. Functionally, prenyltransferase that catalyzes the transfer of the geranylgeranyl moiety of geranylgeranyl diphosphate (GGPP) to the C3 hydroxyl of sn-glycerol-1-phosphate (G1P). This reaction is the first ether-bond-formation step in the biosynthesis of archaeal membrane lipids. This is Geranylgeranylglyceryl phosphate synthase from Metallosphaera sedula (strain ATCC 51363 / DSM 5348 / JCM 9185 / NBRC 15509 / TH2).